A 312-amino-acid polypeptide reads, in one-letter code: DNA-directed RNA polymerase subunit alpha (312 aa).

The alpha N-terminal domain (alpha-NTD) stretch occupies residues 1 to 229 (MLQYQIDRIE…ELFQPLATVT (229 aa)). Residues 245-312 (QIPLEELNLS…ISIPQSRTSA (68 aa)) form an alpha C-terminal domain (alpha-CTD) region.

Belongs to the RNA polymerase alpha chain family. As to quaternary structure, in cyanobacteria the RNAP catalytic core is composed of 2 alpha, 1 beta, 1 beta', 1 gamma and 1 omega subunit. When a sigma factor is associated with the core the holoenzyme is formed, which can initiate transcription.

The enzyme catalyses RNA(n) + a ribonucleoside 5'-triphosphate = RNA(n+1) + diphosphate. In terms of biological role, DNA-dependent RNA polymerase catalyzes the transcription of DNA into RNA using the four ribonucleoside triphosphates as substrates. This chain is DNA-directed RNA polymerase subunit alpha, found in Prochlorococcus marinus (strain MIT 9313).